We begin with the raw amino-acid sequence, 428 residues long: Light-independent protochlorophyllide reductase subunit N (428 aa).

Residues C29, C54, and C115 each contribute to the [4Fe-4S] cluster site.

The protein belongs to the BchN/ChlN family. Protochlorophyllide reductase is composed of three subunits; BchL, BchN and BchB. Forms a heterotetramer of two BchB and two BchN subunits. Requires [4Fe-4S] cluster as cofactor.

It catalyses the reaction chlorophyllide a + oxidized 2[4Fe-4S]-[ferredoxin] + 2 ADP + 2 phosphate = protochlorophyllide a + reduced 2[4Fe-4S]-[ferredoxin] + 2 ATP + 2 H2O. The protein operates within porphyrin-containing compound metabolism; bacteriochlorophyll biosynthesis (light-independent). Its function is as follows. Component of the dark-operative protochlorophyllide reductase (DPOR) that uses Mg-ATP and reduced ferredoxin to reduce ring D of protochlorophyllide (Pchlide) to form chlorophyllide a (Chlide). This reaction is light-independent. The NB-protein (BchN-BchB) is the catalytic component of the complex. The protein is Light-independent protochlorophyllide reductase subunit N of Cereibacter sphaeroides (strain ATCC 17023 / DSM 158 / JCM 6121 / CCUG 31486 / LMG 2827 / NBRC 12203 / NCIMB 8253 / ATH 2.4.1.) (Rhodobacter sphaeroides).